Here is a 112-residue protein sequence, read N- to C-terminus: Integration host factor subunit alpha (112 aa).

It belongs to the bacterial histone-like protein family. Heterodimer of an alpha and a beta chain.

In terms of biological role, this protein is one of the two subunits of integration host factor, a specific DNA-binding protein that functions in genetic recombination as well as in transcriptional and translational control. This chain is Integration host factor subunit alpha, found in Rhizobium johnstonii (strain DSM 114642 / LMG 32736 / 3841) (Rhizobium leguminosarum bv. viciae).